A 1486-amino-acid polypeptide reads, in one-letter code: Chromosome partition protein MukB (1486 aa).

34-41 is a binding site for ATP; the sequence is GGNGAGKS. Coiled coils occupy residues 326-418, 444-480, and 509-603; these read LEAD…QYNQ, LETF…QAYQ, and RHLA…RAPV. Residues 666-783 are flexible hinge; it reads PGGSEDQRLN…EVPLFGRAAR (118 aa). Coiled coils occupy residues 835 to 923, 977 to 1115, and 1209 to 1266; these read EAEI…AKLE, EMLS…TAKA, and VEAI…QNVS.

The protein belongs to the SMC family. MukB subfamily. Homodimerization via its hinge domain. Binds to DNA via its C-terminal region. Interacts, and probably forms a ternary complex, with MukE and MukF via its C-terminal region. The complex formation is stimulated by calcium or magnesium. Interacts with tubulin-related protein FtsZ.

It is found in the cytoplasm. The protein localises to the nucleoid. Functionally, plays a central role in chromosome condensation, segregation and cell cycle progression. Functions as a homodimer, which is essential for chromosome partition. Involved in negative DNA supercoiling in vivo, and by this means organize and compact chromosomes. May achieve or facilitate chromosome segregation by condensation DNA from both sides of a centrally located replisome during cell division. In Escherichia coli O1:K1 / APEC, this protein is Chromosome partition protein MukB.